The primary structure comprises 130 residues: uncharacterized protein (130 aa).

This is an uncharacterized protein from Pasteurella multocida (strain Pm70).